The following is a 112-amino-acid chain: MAEIQFSKGLKEPVVPDIRLSRTKTGEKGSAEFYFKQPTILGDQQTEEITGMYLIDEEGEIVTTKVKGKFINGKPMAIEATVIFNSPAEWDRFMRFMERYGSENGLEFTKSS.

The protein belongs to the Psb28 family. Part of the photosystem II complex.

It is found in the cellular thylakoid membrane. The polypeptide is Photosystem II reaction center Psb28 protein (Microcystis aeruginosa (strain NIES-843 / IAM M-2473)).